The chain runs to 453 residues: Glutamyl-tRNA(Gln) amidotransferase subunit A (453 aa).

Active-site charge relay system residues include Lys55 and Ser130. Catalysis depends on Ser154, which acts as the Acyl-ester intermediate.

This sequence belongs to the amidase family. GatA subfamily. In terms of assembly, heterotrimer of A, B and C subunits.

It carries out the reaction L-glutamyl-tRNA(Gln) + L-glutamine + ATP + H2O = L-glutaminyl-tRNA(Gln) + L-glutamate + ADP + phosphate + H(+). Its function is as follows. Allows the formation of correctly charged Gln-tRNA(Gln) through the transamidation of misacylated Glu-tRNA(Gln) in organisms which lack glutaminyl-tRNA synthetase. The reaction takes place in the presence of glutamine and ATP through an activated gamma-phospho-Glu-tRNA(Gln). In Aliarcobacter butzleri (strain RM4018) (Arcobacter butzleri), this protein is Glutamyl-tRNA(Gln) amidotransferase subunit A.